Consider the following 603-residue polypeptide: Sabinene hydrate synthase, chloroplastic (603 aa).

A chloroplast-targeting transit peptide spans 1–47 (MSTISINHVGLLRNPLHGKSKRASINKSWSLCLPRSSSASRLVKPCR). Positions 357 and 361 each coordinate Mn(2+). Residues 357–361 (DDVYD) carry the DDXXD motif motif. 2 homodimerization regions span residues 363–369 (YGTLDEL) and 435–472 (EAEW…VSIP). 2 residues coordinate Mn(2+): Asp-501 and Glu-509.

The protein belongs to the terpene synthase family. In terms of assembly, homodimer. Requires Mn(2+) as cofactor. Mg(2+) serves as cofactor.

It localises to the plastid. The protein localises to the chloroplast. The catalysed reaction is (2E)-geranyl diphosphate + H2O = sabinene hydrate + diphosphate. Its pathway is secondary metabolite biosynthesis; terpenoid biosynthesis. Involved in the biosynthesis of phenolic monoterpenes natural products. Monoterpene synthase which catalyzes the conversion of geranyl diphosphate (GPP) to sabinene hydrate, mainly (Z)-sabinene hydrate and to a lower extent (E)-sabinene hydrate, and the formation of minor amounts and traces of several other monoterpenes (e.g. mainly alpha-thujene, alpha-pinene and myrcene). The polypeptide is Sabinene hydrate synthase, chloroplastic (Thymus vulgaris (Thyme)).